We begin with the raw amino-acid sequence, 141 residues long: D-aminoacyl-tRNA deacylase (141 aa).

The Gly-cisPro motif, important for rejection of L-amino acids signature appears at 133–134 (GP).

It belongs to the DTD family. As to quaternary structure, homodimer.

It is found in the cytoplasm. The enzyme catalyses glycyl-tRNA(Ala) + H2O = tRNA(Ala) + glycine + H(+). It carries out the reaction a D-aminoacyl-tRNA + H2O = a tRNA + a D-alpha-amino acid + H(+). Functionally, an aminoacyl-tRNA editing enzyme that deacylates mischarged D-aminoacyl-tRNAs. Also deacylates mischarged glycyl-tRNA(Ala), protecting cells against glycine mischarging by AlaRS. Acts via tRNA-based rather than protein-based catalysis; rejects L-amino acids rather than detecting D-amino acids in the active site. By recycling D-aminoacyl-tRNA to D-amino acids and free tRNA molecules, this enzyme counteracts the toxicity associated with the formation of D-aminoacyl-tRNA entities in vivo and helps enforce protein L-homochirality. The sequence is that of D-aminoacyl-tRNA deacylase from Kineococcus radiotolerans (strain ATCC BAA-149 / DSM 14245 / SRS30216).